We begin with the raw amino-acid sequence, 230 residues long: Demethylmenaquinone methyltransferase (230 aa).

S-adenosyl-L-methionine contacts are provided by residues Thr-57, Asp-77, 101 to 102 (DI), and Ser-118.

This sequence belongs to the class I-like SAM-binding methyltransferase superfamily. MenG/UbiE family.

It carries out the reaction a 2-demethylmenaquinol + S-adenosyl-L-methionine = a menaquinol + S-adenosyl-L-homocysteine + H(+). It functions in the pathway quinol/quinone metabolism; menaquinone biosynthesis; menaquinol from 1,4-dihydroxy-2-naphthoate: step 2/2. Its function is as follows. Methyltransferase required for the conversion of demethylmenaquinol (DMKH2) to menaquinol (MKH2). The sequence is that of Demethylmenaquinone methyltransferase from Chlamydia felis (strain Fe/C-56) (Chlamydophila felis).